The chain runs to 224 residues: MKINLERLCRRLNYHFNNMAYLKQALTHCSAGSDNYERFEFLGDSILSFVIANELFNRFPLHSEGQLSRLRSFLVKGEMLAEIAREIGLGDYLFLGQGELRSGGFRRTSILADALEAILAAIYLDGGMTAAKQIILMLYSSRLDDPDLNHCLKDAKTQLQEFLQASKFALPEYVLTKVEGDEHAQIFHVTCTIEGVSQVAYGTGPNRRKAEQLAAKAMLEQLQG.

In terms of domain architecture, RNase III spans 5-127 (LERLCRRLNY…ILAAIYLDGG (123 aa)). Glu-40 is a binding site for Mg(2+). Asp-44 is an active-site residue. The Mg(2+) site is built by Asp-113 and Glu-116. Glu-116 is an active-site residue. The region spanning 154–224 (DAKTQLQEFL…AKAMLEQLQG (71 aa)) is the DRBM domain.

Belongs to the ribonuclease III family. As to quaternary structure, homodimer. Mg(2+) serves as cofactor.

The protein resides in the cytoplasm. It carries out the reaction Endonucleolytic cleavage to 5'-phosphomonoester.. Digests double-stranded RNA. Involved in the processing of primary rRNA transcript to yield the immediate precursors to the large and small rRNAs (23S and 16S). Processes some mRNAs, and tRNAs when they are encoded in the rRNA operon. Processes pre-crRNA and tracrRNA of type II CRISPR loci if present in the organism. In Legionella pneumophila (strain Lens), this protein is Ribonuclease 3.